The primary structure comprises 77 residues: Large ribosomal subunit protein uL24 (77 aa).

The tract at residues 42–61 (KKHQKPSQTNANGGVVESEG) is disordered.

This sequence belongs to the universal ribosomal protein uL24 family. In terms of assembly, part of the 50S ribosomal subunit.

Its function is as follows. One of two assembly initiator proteins, it binds directly to the 5'-end of the 23S rRNA, where it nucleates assembly of the 50S subunit. In terms of biological role, one of the proteins that surrounds the polypeptide exit tunnel on the outside of the subunit. In Lactobacillus helveticus (strain DPC 4571), this protein is Large ribosomal subunit protein uL24.